Here is a 199-residue protein sequence, read N- to C-terminus: Fe/S biogenesis protein NfuA (199 aa).

[4Fe-4S] cluster contacts are provided by Cys156 and Cys159.

The protein belongs to the NfuA family. Homodimer. Requires [4Fe-4S] cluster as cofactor.

Involved in iron-sulfur cluster biogenesis. Binds a 4Fe-4S cluster, can transfer this cluster to apoproteins, and thereby intervenes in the maturation of Fe/S proteins. Could also act as a scaffold/chaperone for damaged Fe/S proteins. This Actinobacillus pleuropneumoniae serotype 5b (strain L20) protein is Fe/S biogenesis protein NfuA.